The chain runs to 60 residues: Cecropin-B type 2 (60 aa).

The signal sequence occupies residues 1–24 (MNFSKLFALVLLIGLVLLTGQTEA). Isoleucine 58 is subject to Isoleucine amide.

This sequence belongs to the cecropin family.

It localises to the secreted. Cecropins have lytic and antibacterial activity against several Gram-positive and Gram-negative bacteria. This chain is Cecropin-B type 2 (CECB2), found in Aedes albopictus (Asian tiger mosquito).